A 242-amino-acid chain; its full sequence is Small ribosomal subunit protein uS2 (242 aa).

Belongs to the universal ribosomal protein uS2 family.

In Aeromonas hydrophila subsp. hydrophila (strain ATCC 7966 / DSM 30187 / BCRC 13018 / CCUG 14551 / JCM 1027 / KCTC 2358 / NCIMB 9240 / NCTC 8049), this protein is Small ribosomal subunit protein uS2.